A 426-amino-acid chain; its full sequence is 4-hydroxy-3-methylbut-2-en-1-yl diphosphate synthase (flavodoxin) (426 aa).

[4Fe-4S] cluster-binding residues include cysteine 320, cysteine 323, cysteine 366, and glutamate 373.

Belongs to the IspG family. [4Fe-4S] cluster is required as a cofactor.

It catalyses the reaction (2E)-4-hydroxy-3-methylbut-2-enyl diphosphate + oxidized [flavodoxin] + H2O + 2 H(+) = 2-C-methyl-D-erythritol 2,4-cyclic diphosphate + reduced [flavodoxin]. The protein operates within isoprenoid biosynthesis; isopentenyl diphosphate biosynthesis via DXP pathway; isopentenyl diphosphate from 1-deoxy-D-xylulose 5-phosphate: step 5/6. Converts 2C-methyl-D-erythritol 2,4-cyclodiphosphate (ME-2,4cPP) into 1-hydroxy-2-methyl-2-(E)-butenyl 4-diphosphate. This is 4-hydroxy-3-methylbut-2-en-1-yl diphosphate synthase (flavodoxin) from Wolbachia sp. subsp. Drosophila simulans (strain wRi).